A 384-amino-acid polypeptide reads, in one-letter code: Alanine racemase (384 aa).

K46 serves as the catalytic Proton acceptor; specific for D-alanine. K46 carries the post-translational modification N6-(pyridoxal phosphate)lysine. Position 144 (R144) interacts with substrate. The active-site Proton acceptor; specific for L-alanine is Y278. M326 contacts substrate.

Belongs to the alanine racemase family. The cofactor is pyridoxal 5'-phosphate.

The catalysed reaction is L-alanine = D-alanine. Its pathway is amino-acid biosynthesis; D-alanine biosynthesis; D-alanine from L-alanine: step 1/1. Functionally, catalyzes the interconversion of L-alanine and D-alanine. May also act on other amino acids. This Frankia casuarinae (strain DSM 45818 / CECT 9043 / HFP020203 / CcI3) protein is Alanine racemase (alr).